The primary structure comprises 144 residues: Large ribosomal subunit protein uL16 (144 aa).

It belongs to the universal ribosomal protein uL16 family. In terms of assembly, part of the 50S ribosomal subunit.

Its function is as follows. Binds 23S rRNA and is also seen to make contacts with the A and possibly P site tRNAs. This is Large ribosomal subunit protein uL16 from Bacillus cytotoxicus (strain DSM 22905 / CIP 110041 / 391-98 / NVH 391-98).